The primary structure comprises 897 residues: Staphylococcal nuclease domain-containing protein 1 (897 aa).

TNase-like domains follow at residues 18-167, 194-329, 342-499, and 528-663; these read QLQR…LWSE, KPVN…IWKD, RQFV…LHSK, and GRSE…LWAN. The 59-residue stretch at 732–790 folds into the Tudor domain; that stretch reads APRRGEFCIAKFADGEWYRARVEKVESPAKVHVFYIDYGNREVLSSTRLAALPPAFSTR.

It is found in the cytoplasm. The protein is Staphylococcal nuclease domain-containing protein 1 (snd1) of Danio rerio (Zebrafish).